The primary structure comprises 500 residues: MLYFILLPLLFLVISYKFLYSKTQRFNLPPGPPSRPFVGHLHLMKPPIHRLLQRYSNQYGPIFSLRFGSRRVVVITSPSLAQESFTGQNDIVLSSRPLQLTAKYVAYNHTTVGTAPYGDHWRNLRRICSQEILSSHRLINFQHIRKDEILRMLTRLSRYTQTSNESNDFTHIELEPLLSDLTFNNIVRMVTGKRYYGDDVNNKEEAELFKKLVYDIAMYSGANHSADYLPILKLFGNKFEKEVKAIGKSMDDILQRLLDECRRDKEGNTMVNHLISLQQQQPEYYTDVIIKGLMMSMMLAGTETSAVTLEWAMANLLRNPEVLEKARSEIDEKIGKDRLIDESDIAVLPYLQNVVSETFRLFPVAPFLIPRSPTDDMKIGGYDVPRDTIVMVNAWAIHRDPEIWEEPEKFNPDRYNDGCGSDYYVYKLMPFGNGRRTCPGAGLGQRIVTLALGSLIQCFEWENVKGEEMDMSESTGLGMRKMDPLRAMCRPRPIMSKLLL.

A helical transmembrane segment spans residues 1–21 (MLYFILLPLLFLVISYKFLYS). Lysine 248 is covalently cross-linked (Glycyl lysine isopeptide (Lys-Gly) (interchain with G-Cter in ubiquitin)). Cysteine 438 serves as a coordination point for heme.

The protein belongs to the cytochrome P450 family. Heme serves as cofactor.

The protein localises to the membrane. Its pathway is secondary metabolite biosynthesis. Its function is as follows. Involved in indole glucosinolate biosynthesis. Catalyzes hydroxylation reactions of the glucosinolate indole ring. Converts indol-3-yl-methylglucosinolate (I3M) to 4-hydroxy-indol-3-yl-methylglucosinolate (4OH-I3M) and/or 1-hydroxy-indol-3-yl-methylglucosinolate (1OH-I3M) intermediates. These hydroxy intermediates are converted to 4-methoxy-indol-3-yl-methylglucosinolate (4MO-I3M) and 1-methoxy-indol-3-yl-methylglucosinolate (1MO-I3M) by indole glucosinolate methyltransferase 1 and 2 (IGMT1 and IGMT2). The protein is Cytochrome P450 81F1 of Arabidopsis thaliana (Mouse-ear cress).